We begin with the raw amino-acid sequence, 221 residues long: Type 3 secretion system stator protein (221 aa).

This sequence belongs to the SctL stator family. As to quaternary structure, the core secretion machinery of the T3SS is composed of approximately 20 different proteins, including cytoplasmic components, a base, an export apparatus and a needle. This subunit is part of the cytosolic complex. Interacts directly with YscN/SctN (T3SS ATPase) and YscQ/SctQ (the major sorting platform component).

The protein resides in the cytoplasm. Its function is as follows. Component of the type III secretion system (T3SS), also called injectisome, which is used to inject bacterial effector proteins into eukaryotic host cells. Acts as a regulator of the YscN/SctN ATPase activity. The chain is Type 3 secretion system stator protein from Yersinia pestis.